A 295-amino-acid polypeptide reads, in one-letter code: Defective in cullin neddylation protein 1 (295 aa).

Residues 8–45 (QKTKLRQFVQWTQVTEAVSLNFLAKANWNIEYAMTLYF) enclose the UBA-like domain. Positions 60 to 272 (VDRSNIERLF…LIDQFVDYCR (213 aa)) constitute a DCUN1 domain.

As to quaternary structure, interacts with the cullin cul-3. Interacts with ubiquitin via its UBA-like domain. Interacts with ned-8/nedd8.

Its subcellular location is the nucleus. Its function is as follows. Required for neddylation of cullin components of SCF-type E3 ubiquitin ligase complexes. Neddylation of cullins play an essential role in the regulation of SCF-type complexes activity. Does not act by preventing deneddylation, but rather facilitates neddylation, possibly by acting with rbx-1 to recruit the Nedd8-charged E2 enzyme to the cullin component of SCF-type complexes. This Caenorhabditis elegans protein is Defective in cullin neddylation protein 1 (dcn-1).